The following is a 1149-amino-acid chain: Guanine nucleotide exchange factor DBS (1149 aa).

The region spanning 52-224 (MATASDEIMH…DLGGTLDYCH (173 aa)) is the CRAL-TRIO domain. The stretch at 355 to 454 (HFEQGFREVK…SEVTRRRDLL (100 aa)) is one Spectrin repeat. A phosphoserine mark is found at Ser457, Ser462, Ser471, and Ser480. The stretch at 503–528 (LETGAENKIQELNKIYKEYECILNQD) forms a coiled coil. Residues 555 to 627 (KKLAAKQTRP…RTSSTGEEEE (73 aa)) are disordered. Over residues 583-594 (PGSWRSSENSSS) the composition is skewed to low complexity. Residues 607–616 (AKSEMSEPRQ) are compositionally biased toward basic and acidic residues. Position 621 is a phosphoserine (Ser621). Residue Thr622 is modified to Phosphothreonine. The region spanning 632–812 (LRRHVMNELL…LGILKAVNDS (181 aa)) is the DH domain. Positions 830 to 946 (KLLMQGSFSV…WVNEIRKVLT (117 aa)) constitute a PH domain. The tract at residues 956 to 1033 (SQHRALEQSH…EAPEEDGGWS (78 aa)) is disordered. Residues 964 to 978 (SHSLPLPTPASTSPT) are compositionally biased toward low complexity. Phosphoserine occurs at positions 1033, 1034, 1041, and 1042. Residues 1055–1116 (LVPGKYTVLM…PASSLATLLG (62 aa)) enclose the SH3 domain.

Belongs to the MCF2 family. Interacts with GTP-bound RAC1. Interacts with CDC42. Interacts with RHOA. Interacts with CCPG1, which results in specific inhibition of its exchange activity toward RHOA, but does not affect its activity on CDC42. Post-translationally, mainly phosphorylated on serine. Highest expression in the brain, where it is found in neurons and alpha-tanycytes (at protein level). Detected in brain, and at lower levels in the heart.

The protein resides in the cytoplasm. The protein localises to the cell membrane. Guanine nucleotide exchange factor that catalyzes guanine nucleotide exchange on RHOA and CDC42, and thereby contributes to the regulation of RHOA and CDC42 signaling pathways. Seems to lack activity with RAC1. Becomes activated and highly tumorigenic by truncation of the N-terminus. In Rattus norvegicus (Rat), this protein is Guanine nucleotide exchange factor DBS (Mcf2l).